A 355-amino-acid polypeptide reads, in one-letter code: RNA binding protein fox-1 homolog 1 (355 aa).

The tract at residues 1 to 123 (MNCEREQLRG…QPKRLHVSNI (123 aa)) is disordered. The segment covering 70 to 112 (QSHSEQSAADTSAHTVSGTATTDDSAPTDGQPQTQPSENTENK) has biased composition (polar residues). In terms of domain architecture, RRM spans 116–174 (KRLHVSNIPFRFRDPDLRQMFGGFGFVTFENSADADRAREKLHGTVVEGRKIEVNNATA). Arg298 carries the post-translational modification Asymmetric dimethylarginine.

In terms of assembly, binds to the C-terminus of ATXN2.

Its subcellular location is the nucleus. It localises to the cytoplasm. RNA-binding protein that regulates alternative splicing events by binding to 5'-UGCAUGU-3' elements. Prevents binding of U2AF2 to the 3'-splice site. Regulates alternative splicing of tissue-specific exons and of differentially spliced exons during erythropoiesis. The protein is RNA binding protein fox-1 homolog 1 (RBFOX1) of Bos taurus (Bovine).